Here is a 124-residue protein sequence, read N- to C-terminus: Ragulator complex protein LAMTOR3 (124 aa).

This sequence belongs to the LAMTOR3 family. In terms of assembly, part of the Ragulator complex composed of lamtor1, lamtor2, lamtor3, lamtor4 and lamtor5. The Ragulator complex interacts with slc38a9; the probable amino acid sensor. Component of the lysosomal folliculin complex (LFC).

Its subcellular location is the late endosome membrane. As part of the Ragulator complex it is involved in amino acid sensing and activation of mTORC1, a signaling complex promoting cell growth in response to growth factors, energy levels, and amino acids. Activated by amino acids through a mechanism involving the lysosomal V-ATPase, the Ragulator plays a dual role for the small GTPases Rag (RagA/RRAGA, RagB/RRAGB, RagC/RRAGC and/or RagD/RRAGD): it (1) acts as a guanine nucleotide exchange factor (GEF), activating the small GTPases Rag and (2) mediates recruitment of Rag GTPases to the lysosome membrane. Activated Ragulator and Rag GTPases function as a scaffold recruiting mTORC1 to lysosomes where it is in turn activated. This Danio rerio (Zebrafish) protein is Ragulator complex protein LAMTOR3 (lamtor3).